Consider the following 569-residue polypeptide: Linoleate hydratase (569 aa).

Tyr87 serves as a coordination point for FAD. The active-site Proton donor is Tyr205. 3 residues coordinate FAD: Val254, Ser300, and Thr524.

The protein belongs to the oleate hydratase family. It depends on FAD as a cofactor.

The protein localises to the cell membrane. Its subcellular location is the cytoplasm. The enzyme catalyses (9Z,12Z)-octadecadienoate + H2O = (10S)-hydroxy-(12Z)-octadecenoate. It catalyses the reaction (10E,12Z)-octadecadienoate + H2O = (10S)-hydroxy-(12Z)-octadecenoate. The catalysed reaction is (9Z)-octadecenoate + H2O = 10-hydroxyoctadecanoate. It carries out the reaction (10E)-octadecenoate + H2O = 10-hydroxyoctadecanoate. The enzyme catalyses (9E,11E)-octadecadienoate + H2O = 10-hydroxy-(11E)-octadecenoate. It catalyses the reaction (9Z,11E)-octadecadienoate + H2O = 10-hydroxy-(11E)-octadecenoate. The catalysed reaction is (9Z)-hexadecenoate + H2O = 10-hydroxyhexadecanoate. It carries out the reaction (9Z,12Z,15Z)-octadecatrienoate + H2O = (10S)-hydroxy-(12Z,15Z)-octadecadienoate. The enzyme catalyses (6Z,9Z,12Z)-octadecatrienoate + H2O = (10S)-hydroxy-(6Z,12Z)-octadecadienoate. It catalyses the reaction (6Z,9Z,12Z,15Z)-octadecatetraenoate + H2O = (10S)-hydroxy-(6Z,12Z,15Z)-octadecatrienoate. Its pathway is lipid metabolism; fatty acid metabolism. Its activity is regulated as follows. The addition of NADH or NADPH highly increases catalytic activity, likely by reducing the cofactor FAD to FADH2. The hydration and dehydration reactions are strongly inhibited by Ag(+), Fe(2+), Cu(2+), Zn(2+), Hg(2+), and Fe(3+). Functionally, is involved in a saturation metabolic pathway of polyunsaturated fatty acids, that detoxifies unsaturated fatty acids and generates hydroxy fatty acids, oxo fatty acids, conjugated fatty acids such as conjugated linoleic acids (CLAs), and partially saturated trans-fatty acids as intermediates. CLA-HY catalyzes the hydration and dehydration steps in the production of 10-hydroxy-cis-12-octadecenoate, trans-10,cis-12-CLA, cis-9,trans-11-CLA, trans-9,trans-11-CLA, oleate and trans-10-octadecenoate during linoleate metabolism. Is also able to hydrate palmitoleic acid (cis-9-hexadecenoic acid), oleic acid, alpha-linolenic acid, gamma-linolenic acid, and stearidonic acid into the corresponding 10-hydroxy fatty acids, and dehydrate 10-hydroxy-cis-12,cis-15-octadecadienoic acid, 10-hydroxy-cis-6,cis-12-octadecadienoic acid, and 10-hydroxyoctadecanoic acid into the corresponding fatty acids with cis double bonds at the Delta9 position. As part of the gut microbiome, this enzyme modifies host fatty acid composition and is expected to improve human health by altering lipid metabolism related to the onset of metabolic syndrome. Shows regioselectivity for Delta9 double bond hydration, generating C10 hydroxy groups in the (S)-configuration with high enantioselectivity, when another double bond is in position 12. Is not able to hydrate fatty acids with a trans carbon-carbon double bond at Delta9 position (elaidic acid, trans-9-octadecenoic acid), fatty acid esters (methyl linoleate, monolinolein, dilinolein, and trilinolein), and conjugated fatty acids (conjugated linoleic acids), as well as fatty acids with other chain lengths, such as myristoleic acid (cis-9-tetradecenoic acid), arachidonic acid (cis-5,cis-8,cis-11,cis-14-eicosatetraenoic acid), EPA (cis-5,cis-8,cis-11,cis-14,cis-17-eicosapentaenoic acid), DHA (cis-4,cis-7,cis-10,cis-13,cis-16,cis-19-docosahexaenoic acid) and fatty acids with a cis carbon-carbon double bond at Delta11 position, such as cis-vaccenic acid and cis-11-octadecenoic acid, or fatty alcohols, such as linoleyl alcohol. Is not able to dehydrate 12-hydroxy, 3-hydroxy, and 9-hydroxy fatty acids. This is Linoleate hydratase from Lactiplantibacillus plantarum (Lactobacillus plantarum).